Reading from the N-terminus, the 1765-residue chain is RANBP2-like and GRIP domain-containing protein 8 (1765 aa).

Threonine 19 carries the post-translational modification Phosphothreonine. A Phosphoserine modification is found at serine 21. 3 TPR repeats span residues 26-59 (SMKG…QERD), 60-93 (PKAH…NPTQ), and 648-681 (EDAH…VSYW). Residues 760–804 (GPLYKNGSLRNADSEIKHSTPSPTKYSLSPSKSYKYSPETPPRWT) form a disordered region. Positions 778 to 797 (STPSPTKYSLSPSKSYKYSP) are enriched in low complexity. The region spanning 1036-1172 (HFEPVVQMPE…FEECQRLLLD (137 aa)) is the RanBD1 1 domain. Disordered regions lie at residues 1216 to 1247 (TEEE…PTLE) and 1306 to 1330 (AKLN…EERD). Polar residues predominate over residues 1231-1244 (SDTTIKPNAENTGP). Positions 1317–1329 (TDEESVVTQEEER) are enriched in acidic residues. Residues 1333–1469 (YFEPVVPLPD…FDEAKTAQEK (137 aa)) form the RanBD1 2 domain. Residues 1580-1593 (NNSETSSVAQSGSE) show a composition bias toward polar residues. Disordered stretches follow at residues 1580–1621 (NNSE…KNLS) and 1746–1765 (KGKL…RSSG). Positions 1594–1617 (SKVEPKKCELSKNSDIEQSSDSKV) are enriched in basic and acidic residues. The GRIP domain maps to 1702 to 1752 (REKSAANLEYLKNVLLQFIFLKPGSERERLLPVINTMLQLSPEEKGKLAAV).

Interacts with GTP-bound ARL1.

The polypeptide is RANBP2-like and GRIP domain-containing protein 8 (RGPD8) (Homo sapiens (Human)).